The following is a 118-amino-acid chain: Small ribosomal subunit protein uS13 (118 aa).

The segment at 94-118 is disordered; that stretch reads GLPLRGQRTRTNARTRKGPRKAIRK.

Belongs to the universal ribosomal protein uS13 family. Part of the 30S ribosomal subunit. Forms a loose heterodimer with protein S19. Forms two bridges to the 50S subunit in the 70S ribosome.

Located at the top of the head of the 30S subunit, it contacts several helices of the 16S rRNA. In the 70S ribosome it contacts the 23S rRNA (bridge B1a) and protein L5 of the 50S subunit (bridge B1b), connecting the 2 subunits; these bridges are implicated in subunit movement. Contacts the tRNAs in the A and P-sites. The sequence is that of Small ribosomal subunit protein uS13 from Xanthomonas axonopodis pv. citri (strain 306).